The primary structure comprises 437 residues: Diaminopimelate decarboxylase (437 aa).

Lysine 81 is subject to N6-(pyridoxal phosphate)lysine. Pyridoxal 5'-phosphate is bound by residues glycine 256 and 298–301 (EPGR). Residues arginine 301, arginine 337, and tyrosine 341 each coordinate substrate. The Proton donor role is filled by cysteine 366. Substrate-binding residues include glutamate 367 and tyrosine 396. Pyridoxal 5'-phosphate is bound at residue tyrosine 396.

It belongs to the Orn/Lys/Arg decarboxylase class-II family. LysA subfamily. In terms of assembly, homodimer. Requires pyridoxal 5'-phosphate as cofactor.

It carries out the reaction meso-2,6-diaminopimelate + H(+) = L-lysine + CO2. Its pathway is amino-acid biosynthesis; L-lysine biosynthesis via DAP pathway; L-lysine from DL-2,6-diaminopimelate: step 1/1. Specifically catalyzes the decarboxylation of meso-diaminopimelate (meso-DAP) to L-lysine. The sequence is that of Diaminopimelate decarboxylase from Actinosynnema pretiosum subsp. auranticum.